Consider the following 346-residue polypeptide: Annexin A1 (346 aa).

Ser-5 carries the phosphoserine; by TRPM7 modification. Gln-19 participates in a covalent cross-link: Isoglutamyl lysine isopeptide (Gln-Lys) (interchain with K-?). At Tyr-21 the chain carries Phosphotyrosine; by EGFR. Position 27 is a phosphoserine; by PKC (Ser-27). Phosphoserine occurs at positions 34 and 37. 4 Annexin repeats span residues 42–113, 114–185, 197–269, and 273–344; these read FDAS…ALLK, TPAQ…SLAK, DLAD…AIVK, and STPA…ALCG. Residue Lys-58 is modified to N6-acetyllysine. Ca(2+) is bound by residues Gly-59, Val-60, Glu-62, Lys-97, Leu-100, Glu-105, Met-127, Gly-129, Gly-131, Thr-132, and Glu-134. At Thr-136 the chain carries Phosphothreonine. Residues Asp-171, Gly-210, and Arg-213 each contribute to the Ca(2+) site. Lys-214 participates in a covalent cross-link: Glycyl lysine isopeptide (Lys-Gly) (interchain with G-Cter in SUMO1); alternate. Lys-214 is covalently cross-linked (Glycyl lysine isopeptide (Lys-Gly) (interchain with G-Cter in SUMO2); alternate). Residue Gly-215 participates in Ca(2+) binding. Lys-239 carries the N6-acetyllysine modification. Ca(2+)-binding residues include Asp-253, Glu-255, and Leu-256. A Glycyl lysine isopeptide (Lys-Gly) (interchain with G-Cter in SUMO1) cross-link involves residue Lys-257. Ca(2+) contacts are provided by Glu-261, Met-286, Gly-288, and Gly-290. N6-acetyllysine is present on Lys-312. Cysteines 324 and 343 form a disulfide. Ca(2+)-binding residues include Leu-328, Glu-330, and Thr-331. A Glycyl lysine isopeptide (Lys-Gly) (interchain with G-Cter in SUMO1) cross-link involves residue Lys-332. Glu-336 is a binding site for Ca(2+).

It belongs to the annexin family. Homodimer; non-covalently linked. Homodimer; linked by transglutamylation. Homodimers linked by transglutamylation are observed in placenta, but not in other tissues. Interacts with S100A11. Heterotetramer, formed by two molecules each of S100A11 and ANXA1. Interacts with DYSF. Interacts with EGFR. Post-translationally, phosphorylated by protein kinase C, EGFR and TRPM7. Phosphorylated in response to EGF treatment. In terms of processing, sumoylated. Proteolytically cleaved by cathepsin CTSG to release the active N-terminal peptide Ac2-26.

It is found in the nucleus. Its subcellular location is the cytoplasm. It localises to the cell projection. The protein resides in the cilium. The protein localises to the basolateral cell membrane. It is found in the lateral cell membrane. Its subcellular location is the cell membrane. It localises to the apical cell membrane. The protein resides in the membrane. The protein localises to the endosome membrane. It is found in the secreted. Its subcellular location is the extracellular space. It localises to the early endosome. The protein resides in the cytoplasmic vesicle membrane. The protein localises to the extracellular exosome. It is found in the cytoplasmic vesicle. Its subcellular location is the secretory vesicle lumen. It localises to the phagocytic cup. Its function is as follows. Plays important roles in the innate immune response as effector of glucocorticoid-mediated responses and regulator of the inflammatory process. Has anti-inflammatory activity. Plays a role in glucocorticoid-mediated down-regulation of the early phase of the inflammatory response. Contributes to the adaptive immune response by enhancing signaling cascades that are triggered by T-cell activation, regulates differentiation and proliferation of activated T-cells. Promotes the differentiation of T-cells into Th1 cells and negatively regulates differentiation into Th2 cells. Has no effect on unstimulated T-cells. Negatively regulates hormone exocytosis via activation of the formyl peptide receptors and reorganization of the actin cytoskeleton. Has high affinity for Ca(2+) and can bind up to eight Ca(2+) ions. Displays Ca(2+)-dependent binding to phospholipid membranes. Plays a role in the formation of phagocytic cups and phagosomes. Plays a role in phagocytosis by mediating the Ca(2+)-dependent interaction between phagosomes and the actin cytoskeleton. In terms of biological role, functions at least in part by activating the formyl peptide receptors and downstream signaling cascades. Promotes chemotaxis of granulocytes and monocytes via activation of the formyl peptide receptors. Promotes rearrangement of the actin cytoskeleton, cell polarization and cell migration. Promotes resolution of inflammation and wound healing. Acts via neutrophil N-formyl peptide receptors to enhance the release of CXCL2. The chain is Annexin A1 (ANXA1) from Cavia cutleri (Guinea pig).